The sequence spans 391 residues: Tumor susceptibility gene 101 protein (391 aa).

Ala-2 carries the N-acetylalanine modification. In terms of domain architecture, UEV spans 2 to 145 (AVSESQLKKM…GEEPPVFSRP (144 aa)). The interval 159–163 (PPNTS) is interaction with CEP55. Residues 197 to 220 (YPATTSSQYPSQPPVTTVGPSRDG) form a disordered region. Residues 200 to 215 (TTSSQYPSQPPVTTVG) show a composition bias toward polar residues. Phosphothreonine is present on Thr-221. Residues 237 to 317 (DKLRWRMKEE…NQSENNDIDE (81 aa)) adopt a coiled-coil conformation. Residues 321–324 (PTAP) carry the PTAP/PSAP motif motif. The SB domain maps to 323–391 (APLYKQILNL…RKTAGLSDLY (69 aa)).

Belongs to the ubiquitin-conjugating enzyme family. UEV subfamily. In terms of assembly, component of the ESCRT-I complex (endosomal sorting complex required for transport I) which consists of TSG101, VPS28, a VPS37 protein (VPS37A to -D) and MVB12A or MVB12B in a 1:1:1:1 stoichiometry. Interacts with VPS37A, VPS37B and VPS37C. Component of an ESCRT-I complex (endosomal sorting complex required for transport I) which consists of TSG101, VPS28, VPS37A and UBAP1 in a 1:1:1:1 stoichiometry. Interacts with DMAP1. Interacts with GMCL. Interacts with ubiquitin, stathmin and AATF. Interacts with HGS; the interaction mediates the association with the ESCRT-0 complex. Interacts with GGA1 and GGA3. Interacts (via UEV domain) with PDCD6IP/AIP1. Interacts with VPS28, SNF8 and VPS36. Self-associates. Interacts with MVB12A; the association appears to be mediated by the TSG101-VPS37 binary subcomplex. Interacts with VPS37D. Interacts with LRSAM1. Interacts with CEP55; the interaction is required for cytokinesis. Interacts with PDCD6. Interacts with LITAF. Interacts with murine leukemia virus Gag polyprotein (via PSAP motif). Interacts with MGRN1. Interacts with ARRDC1; recruits TSG101 to the plasma membrane. Post-translationally, monoubiquitinated at multiple sites by LRSAM1 and by MGRN1. Ubiquitination inactivates it, possibly by regulating its shuttling between an active membrane-bound protein and an inactive soluble form. Ubiquitination by MGRN1 requires the presence of UBE2D1. As to expression, ubiquitous. Higher expression in brain and mammary gland. Lower expression in liver and tumoral tissues.

The protein resides in the cytoplasm. Its subcellular location is the early endosome membrane. It localises to the late endosome membrane. It is found in the cytoskeleton. The protein localises to the microtubule organizing center. The protein resides in the centrosome. Its subcellular location is the midbody. It localises to the midbody ring. It is found in the nucleus. Functionally, component of the ESCRT-I complex, a regulator of vesicular trafficking process. Binds to ubiquitinated cargo proteins and is required for the sorting of endocytic ubiquitinated cargos into multivesicular bodies (MVBs). Mediates the association between the ESCRT-0 and ESCRT-I complex. Required for completion of cytokinesis; the function requires CEP55. May be involved in cell growth and differentiation. Acts as a negative growth regulator. Required for the exosomal release of SDCBP, CD63 and syndecan. It may also play a role in the extracellular release of microvesicles that differ from the exosomes. In Mus musculus (Mouse), this protein is Tumor susceptibility gene 101 protein (Tsg101).